A 116-amino-acid chain; its full sequence is Ferredoxin-like protein in nif region (116 aa).

One can recognise a 4Fe-4S ferredoxin-type domain in the interval 2 to 29 (AYTITSQCISCKLCSSVCPTGAIKVAED). Residues cysteine 9, cysteine 12, cysteine 15, and cysteine 19 each contribute to the iron-sulfur cluster site.

The polypeptide is Ferredoxin-like protein in nif region (fdxN) (Trichormus azollae (Anabaena azollae)).